Consider the following 213-residue polypeptide: Redox-sensing transcriptional repressor Rex (213 aa).

The H-T-H motif DNA-binding region spans 16-55; the sequence is VYSRFLERMDRNGIVTVSSGEIAEGVGVSSAQVRKDLAYF. An NAD(+)-binding site is contributed by 90-95; it reads GAGNLG.

This sequence belongs to the transcriptional regulatory Rex family. As to quaternary structure, homodimer.

It is found in the cytoplasm. Its function is as follows. Modulates transcription in response to changes in cellular NADH/NAD(+) redox state. The chain is Redox-sensing transcriptional repressor Rex from Pelotomaculum thermopropionicum (strain DSM 13744 / JCM 10971 / SI).